Consider the following 355-residue polypeptide: 3-dehydroquinate synthase (355 aa).

NAD(+)-binding positions include 71-76 (EGEERK), 105-109 (GVVGD), 129-130 (TS), Lys-142, and Lys-151. Zn(2+) contacts are provided by Glu-184, His-246, and His-263.

This sequence belongs to the sugar phosphate cyclases superfamily. Dehydroquinate synthase family. The cofactor is NAD(+). It depends on Co(2+) as a cofactor. Requires Zn(2+) as cofactor.

Its subcellular location is the cytoplasm. It carries out the reaction 7-phospho-2-dehydro-3-deoxy-D-arabino-heptonate = 3-dehydroquinate + phosphate. It functions in the pathway metabolic intermediate biosynthesis; chorismate biosynthesis; chorismate from D-erythrose 4-phosphate and phosphoenolpyruvate: step 2/7. Catalyzes the conversion of 3-deoxy-D-arabino-heptulosonate 7-phosphate (DAHP) to dehydroquinate (DHQ). This is 3-dehydroquinate synthase from Streptococcus pneumoniae serotype 4 (strain ATCC BAA-334 / TIGR4).